Reading from the N-terminus, the 240-residue chain is Small ribosomal subunit protein uS3 (240 aa).

In terms of domain architecture, KH type-2 spans 39 to 107 (IREFIKEECK…ELHLNIVEVR (69 aa)). The segment covering 212-222 (PQARDRRHAEL) has biased composition (basic and acidic residues). The segment at 212–240 (PQARDRRHAELQEGGGPRPQGGGRPRRDR) is disordered. The segment covering 224 to 234 (EGGGPRPQGGG) has biased composition (gly residues).

The protein belongs to the universal ribosomal protein uS3 family. Part of the 30S ribosomal subunit. Forms a tight complex with proteins S10 and S14.

In terms of biological role, binds the lower part of the 30S subunit head. Binds mRNA in the 70S ribosome, positioning it for translation. In Dinoroseobacter shibae (strain DSM 16493 / NCIMB 14021 / DFL 12), this protein is Small ribosomal subunit protein uS3.